A 479-amino-acid chain; its full sequence is 3-isopropylmalate dehydratase large subunit (479 aa).

[4Fe-4S] cluster-binding residues include Cys353, Cys414, and Cys417.

Belongs to the aconitase/IPM isomerase family. LeuC type 1 subfamily. As to quaternary structure, heterodimer of LeuC and LeuD. It depends on [4Fe-4S] cluster as a cofactor.

It catalyses the reaction (2R,3S)-3-isopropylmalate = (2S)-2-isopropylmalate. It functions in the pathway amino-acid biosynthesis; L-leucine biosynthesis; L-leucine from 3-methyl-2-oxobutanoate: step 2/4. Its function is as follows. Catalyzes the isomerization between 2-isopropylmalate and 3-isopropylmalate, via the formation of 2-isopropylmaleate. This Xanthomonas campestris pv. campestris (strain 8004) protein is 3-isopropylmalate dehydratase large subunit.